Here is a 440-residue protein sequence, read N- to C-terminus: UPF0761 membrane protein Rru_A2625 (440 aa).

Transmembrane regions (helical) follow at residues 29–49 (ILAT…THDI), 61–81 (LLAL…FPGF), 117–137 (GLTA…LLTI), 157–177 (LLVY…SFSL), 201–221 (PTLG…MLVP), 224–244 (PVPL…SALL), and 264–284 (ALAA…VVLM).

Belongs to the UPF0761 family.

Its subcellular location is the cell inner membrane. This Rhodospirillum rubrum (strain ATCC 11170 / ATH 1.1.1 / DSM 467 / LMG 4362 / NCIMB 8255 / S1) protein is UPF0761 membrane protein Rru_A2625.